Here is a 174-residue protein sequence, read N- to C-terminus: Trypsin inhibitor (174 aa).

2 disulfides stabilise this stretch: Cys40–Cys86 and Cys131–Cys140.

Belongs to the protease inhibitor I3 (leguminous Kunitz-type inhibitor) family. As to quaternary structure, heterodimer of an alpha and a beta chain linked by a disulfide bond.

Functionally, inhibits trypsin and chymotrypsin with a 1:1 stoichiometry, with dissociation constants of 1.56 nM and 120 nM respectively. Inhibits plasma kallikrein, factor XIIa and plasmin with dissociation constants of 5.0 nM, 150 nM and 18 nM respectively. Does not inhibit factor Xa, thrombin, tissue kallikrein or cysteine proteinases such as papain and bromelain. The sequence is that of Trypsin inhibitor from Enterolobium contortisiliquum (Pacara earpod tree).